A 262-amino-acid polypeptide reads, in one-letter code: Putative dimethyl sulfoxide reductase iron-sulfur subunit B (262 aa).

4Fe-4S ferredoxin-type domains are found at residues 4–34 (YGLV…MGQF), 62–93 (LEMT…TRDD), and 94–123 (GIVE…FNWD). C13, C16, C19, C23, C71, C74, C79, C83, C103, C106, C109, C113, C147, C150, C162, and C166 together coordinate [4Fe-4S] cluster. The interval 209-262 (NGEMSPGRPWKSKKLESELDDDEAAKAARRRSGSVENGYDVTPHVPAETAGGDD) is disordered.

As to quaternary structure, probable multiprotein complex that likely consists of DmsA, DmsB and DmsC. [4Fe-4S] cluster serves as cofactor.

Its subcellular location is the cell membrane. In terms of biological role, dimethyl sulfoxide (DMSO) reductase catalyzes the reduction of dimethyl sulfoxide (DMSO) to dimethyl sulfide (DMS) during anaerobic respiration; it can also use trimethylamine N-oxide (TMAO) as terminal electron acceptor. Subunit B is proposed to be involved in electron transfer. In Halobacterium salinarum (strain ATCC 700922 / JCM 11081 / NRC-1) (Halobacterium halobium), this protein is Putative dimethyl sulfoxide reductase iron-sulfur subunit B (dmsB).